A 674-amino-acid polypeptide reads, in one-letter code: Probable 3',5'-cyclic-AMP phosphodiesterase pde-4 (674 aa).

Residues 1-82 (MPRRRGSSSS…TSSASSYHPP (82 aa)) form a disordered region. Residues 15 to 24 (GGSGGGGGFG) show a composition bias toward gly residues. Residues 39–62 (RTSSPSASSTSRTPPAALPPRTSA) are compositionally biased toward low complexity. A compositionally biased stretch (polar residues) spans 66–78 (PGSNHKLTSSASS). Positions 328-660 (HVPEYGVNCA…EWYQSRIPEE (333 aa)) constitute a PDEase domain. The Proton donor role is filled by His-407. Residues His-411, His-447, Asp-448, and Asp-565 each coordinate a divalent metal cation.

This sequence belongs to the cyclic nucleotide phosphodiesterase family. A divalent metal cation serves as cofactor. As to expression, expressed in dorsal D (DD) motor neurons and several other neurons at the L1 stage. Expression in DD neurons decreases gradually beginning in the late L1 stage. Highly expressed in adult ventral D (VD) motor neurons, but diminished in adult DD motor neurons.

It catalyses the reaction 3',5'-cyclic AMP + H2O = AMP + H(+). Hydrolyzes the second messenger 3',5'-cyclic AMP (cAMP), which is a key regulator of many important physiological processes. Antagonizes dorsal D (DD) motor neuron respecification by reducing levels of cAMP. The polypeptide is Probable 3',5'-cyclic-AMP phosphodiesterase pde-4 (pde-4) (Caenorhabditis elegans).